Here is a 307-residue protein sequence, read N- to C-terminus: MELKQVIIAHKAGHNESKTYAERCARELEARGCKVLMGPSGIKDNPYPVFLASATEKIDLALVLGGDGTTLAAARHLSPEGIPILSVNVGGHLGFLTEPFDVFQDTQKVWDRLNQDRYAVSQRMMLAASLFEGDRRDPQMVGETYYCLNEMCIKPASIDRMPTAIIEVEVDGELIDQYQCDGLLVATPTGSTCYTSSANGPILHPGMDAIVITPICPLSLSSRPIVIPPGSSVNIWPLGDFELNTKLWTDGSLATGVWPGQRVGVWMAHRAAQFILLRESYSFYKTLRDKLQWAGARFLYDGNNKVN.

Asp67 acts as the Proton acceptor in catalysis. NAD(+) is bound by residues Asp67–Gly68, Asn149–Glu150, Arg160, Asp181, and Thr192–Ser197.

Belongs to the NAD kinase family. A divalent metal cation serves as cofactor.

The protein resides in the cytoplasm. The enzyme catalyses NAD(+) + ATP = ADP + NADP(+) + H(+). Involved in the regulation of the intracellular balance of NAD and NADP, and is a key enzyme in the biosynthesis of NADP. Catalyzes specifically the phosphorylation on 2'-hydroxyl of the adenosine moiety of NAD to yield NADP. Essential for photoheterotrophic growth. Has a significant function in the oxidative pentose phosphate (OPP) pathway for glucose catabolism under photoheterotrophic conditions. Is also involved in cellular redox homeostasis. In Synechocystis sp. (strain ATCC 27184 / PCC 6803 / Kazusa), this protein is NAD kinase 1.